A 319-amino-acid polypeptide reads, in one-letter code: Acetyl-coenzyme A carboxylase carboxyl transferase subunit alpha (319 aa).

Residues 36–293 (EVERLKTKLE…HDAFLSELDR (258 aa)) enclose the CoA carboxyltransferase C-terminal domain.

This sequence belongs to the AccA family. Acetyl-CoA carboxylase is a heterohexamer composed of biotin carboxyl carrier protein (AccB), biotin carboxylase (AccC) and two subunits each of ACCase subunit alpha (AccA) and ACCase subunit beta (AccD).

It localises to the cytoplasm. It catalyses the reaction N(6)-carboxybiotinyl-L-lysyl-[protein] + acetyl-CoA = N(6)-biotinyl-L-lysyl-[protein] + malonyl-CoA. The protein operates within lipid metabolism; malonyl-CoA biosynthesis; malonyl-CoA from acetyl-CoA: step 1/1. Functionally, component of the acetyl coenzyme A carboxylase (ACC) complex. First, biotin carboxylase catalyzes the carboxylation of biotin on its carrier protein (BCCP) and then the CO(2) group is transferred by the carboxyltransferase to acetyl-CoA to form malonyl-CoA. The sequence is that of Acetyl-coenzyme A carboxylase carboxyl transferase subunit alpha from Dichelobacter nodosus (strain VCS1703A).